A 131-amino-acid chain; its full sequence is UPF0102 protein YraN (131 aa).

The span at 1-19 (MATVPTRSGSPRQLTTKQT) shows a compositional bias: polar residues. The disordered stretch occupies residues 1–20 (MATVPTRSGSPRQLTTKQTG).

Belongs to the UPF0102 family.

This Escherichia fergusonii (strain ATCC 35469 / DSM 13698 / CCUG 18766 / IAM 14443 / JCM 21226 / LMG 7866 / NBRC 102419 / NCTC 12128 / CDC 0568-73) protein is UPF0102 protein YraN.